The chain runs to 60 residues: Large ribosomal subunit protein bL32 (60 aa).

It belongs to the bacterial ribosomal protein bL32 family.

The polypeptide is Large ribosomal subunit protein bL32 (rpmF) (Thermotoga maritima (strain ATCC 43589 / DSM 3109 / JCM 10099 / NBRC 100826 / MSB8)).